The sequence spans 147 residues: Gastrula-specific protein 17 (147 aa).

Residues 1–119 are disordered; that stretch reads MSQNLDFLAL…TQVYGNHQPG (119 aa). 3 stretches are compositionally biased toward polar residues: residues 20 to 36, 45 to 57, and 74 to 88; these read SPTS…STPP, RQIS…YTNP, and LLQN…SPTA.

In Xenopus laevis (African clawed frog), this protein is Gastrula-specific protein 17 (gs17).